The chain runs to 66 residues: MSESGLKEQITGKVEKTKGQVKEGIGEVTEDRKLKNEGKWDKTKGTIKEKVGKVKQKISDGLDNKE.

The segment at 1–22 (MSESGLKEQITGKVEKTKGQVK) is disordered. A compositionally biased stretch (basic and acidic residues) spans 13–22 (KVEKTKGQVK).

This sequence belongs to the UPF0337 (CsbD) family.

The polypeptide is UPF0337 protein BA_0987/GBAA_0987/BAS0923 (Bacillus anthracis).